The primary structure comprises 298 residues: Mitochondrial distribution and morphology protein 12 (298 aa).

One can recognise an SMP-LTD domain in the interval 1 to 298 (MSIELDWTGL…VYPHFYTLYL (298 aa)). Positions 118 to 142 (SEHEESLSRWSDTESETGTCDSSSL) are disordered. Over residues 133–142 (ETGTCDSSSL) the composition is skewed to polar residues.

It belongs to the MDM12 family. As to quaternary structure, component of the ER-mitochondria encounter structure (ERMES) or MDM complex, composed of MMM1, MDM10, MDM12 and MDM34. An MMM1 homodimer associates with one molecule of MDM12 on each side in a pairwise head-to-tail manner, and the SMP-LTD domains of MMM1 and MDM12 generate a continuous hydrophobic tunnel for phospholipid trafficking.

The protein resides in the mitochondrion outer membrane. It localises to the endoplasmic reticulum membrane. In terms of biological role, component of the ERMES/MDM complex, which serves as a molecular tether to connect the endoplasmic reticulum (ER) and mitochondria. Components of this complex are involved in the control of mitochondrial shape and protein biogenesis, and function in nonvesicular lipid trafficking between the ER and mitochondria. MDM12 is required for the interaction of the ER-resident membrane protein MMM1 and the outer mitochondrial membrane-resident beta-barrel protein MDM10. The MDM12-MMM1 subcomplex functions in the major beta-barrel assembly pathway that is responsible for biogenesis of all mitochondrial outer membrane beta-barrel proteins, and acts in a late step after the SAM complex. The MDM10-MDM12-MMM1 subcomplex further acts in the TOM40-specific pathway after the action of the MDM12-MMM1 complex. Essential for establishing and maintaining the structure of mitochondria and maintenance of mtDNA nucleoids. The chain is Mitochondrial distribution and morphology protein 12 from Malassezia globosa (strain ATCC MYA-4612 / CBS 7966) (Dandruff-associated fungus).